A 209-amino-acid chain; its full sequence is Small ribosomal subunit protein uS4 (209 aa).

Zn(2+) is bound by residues cysteine 9, cysteine 12, cysteine 26, and cysteine 31. The C4-type zinc-finger motif lies at 9-31 (CKLCRREGMKLYLKGERCYTDKC). The S4 RNA-binding domain maps to 98–161 (ARLDNVVYRM…RDLEVIKKAI (64 aa)).

It belongs to the universal ribosomal protein uS4 family. In terms of assembly, part of the 30S ribosomal subunit. Contacts protein S5. The interaction surface between S4 and S5 is involved in control of translational fidelity. Zn(2+) serves as cofactor.

In terms of biological role, one of the primary rRNA binding proteins, it binds directly to 16S rRNA where it nucleates assembly of the body of the 30S subunit. With S5 and S12 plays an important role in translational accuracy. In Thermotoga maritima (strain ATCC 43589 / DSM 3109 / JCM 10099 / NBRC 100826 / MSB8), this protein is Small ribosomal subunit protein uS4 (rpsD).